The following is a 22-amino-acid chain: Brevinin-1OKc (22 aa).

Lysine amide is present on lysine 22.

In terms of tissue distribution, expressed by the skin glands.

It is found in the secreted. Functionally, antimicrobial peptide. Active against Gram-negative bacterium E.coli (MIC=6 uM) and against Gram-positive bacterium S.aureus (MIC=12.5 uM). This Nidirana okinavana (Kampira Falls frog) protein is Brevinin-1OKc.